The following is a 216-amino-acid chain: GTP-binding nuclear protein Ran, testis-specific isoform (216 aa).

Position 2 is an N-acetylalanine (Ala-2). The Small GTPase Ran-type domain maps to 7–171 (PQVQFKVVLV…FWLARKLIGD (165 aa)). 17 to 24 (GDGGTGKT) is a binding site for GTP. Thr-24 carries the post-translational modification Phosphothreonine. The switch-I stretch occupies residues 37–45 (KEYVATLGV). The residue at position 60 (Lys-60) is an N6-acetyllysine. A GTP-binding site is contributed by 65 to 69 (DTAGQ). The segment at 68–84 (GQEKFGGLRDGYYIQAQ) is switch-II. At Lys-71 the chain carries N6-acetyllysine; alternate. A Glycyl lysine isopeptide (Lys-Gly) (interchain with G-Cter in SUMO2); alternate cross-link involves residue Lys-71. A Glycyl lysine isopeptide (Lys-Gly) (interchain with G-Cter in ubiquitin); alternate cross-link involves residue Lys-71. Position 99 is an N6-acetyllysine (Lys-99). 122–125 (NKVD) serves as a coordination point for GTP. Residue Lys-134 is modified to N6-acetyllysine. Lys-159 carries the N6-acetyllysine; alternate modification. Residue Lys-159 is modified to N6-succinyllysine; alternate.

Belongs to the small GTPase superfamily. Ran family. Testis specific.

The protein localises to the nucleus. It catalyses the reaction GTP + H2O = GDP + phosphate + H(+). Its function is as follows. GTP-binding protein involved in nucleocytoplasmic transport. Required for the import of protein into the nucleus and also for RNA export. Involved in chromatin condensation and control of cell cycle. In Mus musculus (Mouse), this protein is GTP-binding nuclear protein Ran, testis-specific isoform (Rasl2-9).